The primary structure comprises 95 residues: Aspartyl/glutamyl-tRNA(Asn/Gln) amidotransferase subunit C (95 aa).

It belongs to the GatC family. In terms of assembly, heterotrimer of A, B and C subunits.

It catalyses the reaction L-glutamyl-tRNA(Gln) + L-glutamine + ATP + H2O = L-glutaminyl-tRNA(Gln) + L-glutamate + ADP + phosphate + H(+). It carries out the reaction L-aspartyl-tRNA(Asn) + L-glutamine + ATP + H2O = L-asparaginyl-tRNA(Asn) + L-glutamate + ADP + phosphate + 2 H(+). Its function is as follows. Allows the formation of correctly charged Asn-tRNA(Asn) or Gln-tRNA(Gln) through the transamidation of misacylated Asp-tRNA(Asn) or Glu-tRNA(Gln) in organisms which lack either or both of asparaginyl-tRNA or glutaminyl-tRNA synthetases. The reaction takes place in the presence of glutamine and ATP through an activated phospho-Asp-tRNA(Asn) or phospho-Glu-tRNA(Gln). In Maricaulis maris (strain MCS10) (Caulobacter maris), this protein is Aspartyl/glutamyl-tRNA(Asn/Gln) amidotransferase subunit C.